Reading from the N-terminus, the 56-residue chain is uncharacterized protein (56 aa).

The protein belongs to the archaeal ATPase family.

This is an uncharacterized protein from Methanocaldococcus jannaschii (strain ATCC 43067 / DSM 2661 / JAL-1 / JCM 10045 / NBRC 100440) (Methanococcus jannaschii).